The primary structure comprises 1265 residues: Protein FAM193A (1265 aa).

Positions 107 to 142 (SEDTYSTLLQRYQRSEEELRRVAEEWLECQKRIDAY) form a coiled coil. The interval 247–272 (APDYLAERSPPSVSSASSGSGSSSPI) is disordered. The segment covering 255 to 271 (SPPSVSSASSGSGSSSP) has biased composition (low complexity). S293 bears the Phosphoserine mark. Disordered stretches follow at residues 331–407 (NGGG…EQAP), 553–586 (GSEILGPTLSETRPEALPPPSSNETPAVSDSKEK), 626–674 (VQSS…APLP), 750–785 (ENGVYDPQQDDGDESADEDSCSEHSSSTSTSTNQKE), 822–841 (LTKRKEEQPKKMDQISERES), 859–881 (ETKPVSSTRAAKRARHKQRKLEE), and 893–1163 (EHLH…DRVN). The span at 355-365 (EADDEEADGES) shows a compositional bias: acidic residues. Phosphoserine is present on S383. Residue S642 is modified to Phosphoserine. Acidic residues predominate over residues 757–769 (QQDDGDESADEDS). Positions 772–781 (EHSSSTSTST) are enriched in low complexity. The span at 868-877 (AAKRARHKQR) shows a compositional bias: basic residues. Residues 873–932 (RHKQRKLEEKARLEAEARAREHLHLQEEQRRREEEEDEEEEEDRFKEEFQRLQELQKLRA) adopt a coiled-coil conformation. 2 stretches are compositionally biased toward basic and acidic residues: residues 893-905 (EHLHLQEEQRRRE) and 915-929 (DRFKEEFQRLQELQK). The span at 931–940 (RAVKKKKKER) shows a compositional bias: basic residues. The segment covering 953 to 973 (RNFQAATESVPNSGNIHNGSL) has biased composition (polar residues). A coiled-coil region spans residues 1093-1118 (TEQKREERKVNSNNNNKKQLNHIKDE). S1129 and S1144 each carry phosphoserine. The segment covering 1149-1159 (GKNKKNKKKKG) has biased composition (basic residues).

This sequence belongs to the FAM193 family.

This Homo sapiens (Human) protein is Protein FAM193A (FAM193A).